Reading from the N-terminus, the 243-residue chain is Leucyl/phenylalanyl-tRNA--protein transferase (243 aa).

The protein belongs to the L/F-transferase family.

The protein resides in the cytoplasm. The catalysed reaction is N-terminal L-lysyl-[protein] + L-leucyl-tRNA(Leu) = N-terminal L-leucyl-L-lysyl-[protein] + tRNA(Leu) + H(+). The enzyme catalyses N-terminal L-arginyl-[protein] + L-leucyl-tRNA(Leu) = N-terminal L-leucyl-L-arginyl-[protein] + tRNA(Leu) + H(+). It catalyses the reaction L-phenylalanyl-tRNA(Phe) + an N-terminal L-alpha-aminoacyl-[protein] = an N-terminal L-phenylalanyl-L-alpha-aminoacyl-[protein] + tRNA(Phe). Functions in the N-end rule pathway of protein degradation where it conjugates Leu, Phe and, less efficiently, Met from aminoacyl-tRNAs to the N-termini of proteins containing an N-terminal arginine or lysine. The polypeptide is Leucyl/phenylalanyl-tRNA--protein transferase (Saccharophagus degradans (strain 2-40 / ATCC 43961 / DSM 17024)).